Consider the following 297-residue polypeptide: GATA transcription factor 24 (297 aa).

The Tify domain occupies 73–108; that stretch reads GIENGDQLTLSFQGQVYVFDRVSPEKVQAVLLLLGG. Residues 143–185 form the CCT domain; that stretch reads RLASLLRFREKRKGRNFDKTIRYTVRKEVALRMQRKKGQFTSA. Positions 178–203 are disordered; that stretch reads KKGQFTSAKSSNDDSGSTGSDWGSNQ. The segment covering 190–201 has biased composition (low complexity); that stretch reads DDSGSTGSDWGS. The GATA-type zinc finger occupies 213–269; sequence QKPEVLCRHCGTSEKSTPMMRRGPDGPRTLCNACGLMWANKGTLRDLSKVPPPQTPQ.

It belongs to the type IV zinc-finger family. Class C subfamily. As to expression, predominantly expressed in shoot apices, inflorescences and roots.

The protein resides in the nucleus. Transcriptional activator that specifically binds 5'-GATA-3' or 5'-GAT-3' motifs within gene promoters. This Arabidopsis thaliana (Mouse-ear cress) protein is GATA transcription factor 24 (GATA24).